The chain runs to 343 residues: RNA 3'-terminal phosphate cyclase (343 aa).

ATP-binding positions include Gln-102 and Phe-284–Gln-288. The active-site Tele-AMP-histidine intermediate is the His-308.

Belongs to the RNA 3'-terminal cyclase family. Type 1 subfamily.

The protein resides in the cytoplasm. The enzyme catalyses a 3'-end 3'-phospho-ribonucleotide-RNA + ATP = a 3'-end 2',3'-cyclophospho-ribonucleotide-RNA + AMP + diphosphate. In terms of biological role, catalyzes the conversion of 3'-phosphate to a 2',3'-cyclic phosphodiester at the end of RNA. The mechanism of action of the enzyme occurs in 3 steps: (A) adenylation of the enzyme by ATP; (B) transfer of adenylate to an RNA-N3'P to produce RNA-N3'PP5'A; (C) and attack of the adjacent 2'-hydroxyl on the 3'-phosphorus in the diester linkage to produce the cyclic end product. The biological role of this enzyme is unknown but it is likely to function in some aspects of cellular RNA processing. The sequence is that of RNA 3'-terminal phosphate cyclase (rtcA) from Thermococcus kodakarensis (strain ATCC BAA-918 / JCM 12380 / KOD1) (Pyrococcus kodakaraensis (strain KOD1)).